Reading from the N-terminus, the 37-residue chain is Potassium channel toxin alpha-KTx 1.11 (37 aa).

Intrachain disulfides connect cysteine 7/cysteine 28, cysteine 13/cysteine 33, and cysteine 17/cysteine 35.

It belongs to the short scorpion toxin superfamily. Potassium channel inhibitor family. Alpha-KTx 01 subfamily. Expressed by the venom gland.

The protein localises to the secreted. Functionally, reversibly blocks the high conductance calcium-activated potassium channels composed of only alpha subunits (KCa1.1/KCNMA1). Unreversibly blocks the high conductance calcium-activated potassium channels composed of alpha and beta1 subunits (KCNMA1 and KCNMB1). Unreversibly and weakly blocks the high conductance calcium-activated potassium channels composed of alpha and beta4 (KCNMA1 and KCNMB4). This is Potassium channel toxin alpha-KTx 1.11 from Centruroides noxius (Mexican scorpion).